Consider the following 310-residue polypeptide: Homoserine kinase (310 aa).

Residue 91 to 101 coordinates ATP; that stretch reads PIGSGLGSSAC.

This sequence belongs to the GHMP kinase family. Homoserine kinase subfamily.

It is found in the cytoplasm. The enzyme catalyses L-homoserine + ATP = O-phospho-L-homoserine + ADP + H(+). It participates in amino-acid biosynthesis; L-threonine biosynthesis; L-threonine from L-aspartate: step 4/5. Functionally, catalyzes the ATP-dependent phosphorylation of L-homoserine to L-homoserine phosphate. This chain is Homoserine kinase, found in Escherichia coli O157:H7.